A 562-amino-acid chain; its full sequence is Protein wntless (562 aa).

The Cytoplasmic segment spans residues 1-13 (MSGTILENLSGRK). A helical transmembrane segment spans residues 14–34 (LSILVSSLLLCQVACFLIGGL). Over 35–239 (YAPVPAGHQI…AIHQNGGFTQ (205 aa)) the chain is Lumenal. N-linked (GlcNAc...) asparagine glycosylation is found at Asn-58 and Asn-103. Residues 240 to 260 (VWLLLKSVLFPFIIGIMVWFW) form a helical membrane-spanning segment. Residues 261–270 (RRVHILQRSP) are Cytoplasmic-facing. A helical transmembrane segment spans residues 271-291 (ALLEYMLLYLGGALSFLNLPL). At 292-311 (EYLTLSFEMPYMLLLSDVRQ) the chain is on the lumenal side. The chain crosses the membrane as a helical span at residues 312-332 (GIFYAMLLSFWLVFAGEHMLI). Residues 333 to 344 (QDSPNKSTIRSR) are Cytoplasmic-facing. Residues 345–365 (YWKHLSAVVVGCISLFVFDIC) form a helical membrane-spanning segment. Residues 366–390 (ERGMQLRNPFYSIWTTPLGAKVAMS) lie on the Lumenal side of the membrane. A helical membrane pass occupies residues 391–411 (FIVLAGVSAGIYFLFLCYMVW). Residues 412–441 (KVFKDIGDKRTSLPSMSQARRLHYEGLIYR) are Cytoplasmic-facing. A helical membrane pass occupies residues 442-462 (FKFLMLATLLCAGLTVAGFIM). The Lumenal segment spans residues 463-482 (GQMAEGHWKWNEDIEIQLTS). The chain crosses the membrane as a helical span at residues 483 to 503 (AFLTGVYGMWNIYIFALLILY). At 504–562 (APSHKQWPTMRHSDETTQSNENIVASAASEEIEFSNLPSDSNPSEISSLTSFTRKVAFD) the chain is on the cytoplasmic side. Positions 538-562 (SNLPSDSNPSEISSLTSFTRKVAFD) are disordered. Positions 539-556 (NLPSDSNPSEISSLTSFT) are enriched in polar residues.

It belongs to the wntless family. As to quaternary structure, interacts with wg; in the Golgi. Interacts with Vps35, a component of the retromer complex; wls stability is regulated by Vps35.

It localises to the presynaptic cell membrane. The protein resides in the postsynaptic cell membrane. Its subcellular location is the cell membrane. The protein localises to the endoplasmic reticulum membrane. It is found in the endosome membrane. It localises to the golgi apparatus membrane. In terms of biological role, a segment polarity gene required for wingless (wg)-dependent patterning processes, acting in both wg-sending cells and wg-target cells. In non-neuronal cells wls directs wg secretion. The wls traffic loop encompasses the Golgi, the cell surface, an endocytic compartment and a retrograde route leading back to the Golgi, and involves clathrin-mediated endocytosis and the retromer complex (a conserved protein complex consisting of Vps35 and Vps26). In neuronal cells (the larval motorneuron NMJ), the wg signal moves across the synapse via the release of wls-containing exosome-like vesicles. Postsynaptic wls is required for the trafficking of fz2 through the fz2-interacting protein Grip. The chain is Protein wntless from Drosophila mojavensis (Fruit fly).